We begin with the raw amino-acid sequence, 138 residues long: Putative pre-16S rRNA nuclease (138 aa).

Belongs to the YqgF nuclease family.

The protein localises to the cytoplasm. Its function is as follows. Could be a nuclease involved in processing of the 5'-end of pre-16S rRNA. The polypeptide is Putative pre-16S rRNA nuclease (Escherichia coli O157:H7).